The following is a 201-amino-acid chain: 3-mercaptopropionate dioxygenase (201 aa).

Fe cation is bound by residues histidine 89, histidine 91, and histidine 142.

Belongs to the cysteine dioxygenase family. In terms of assembly, forms homodimer in the crystal; however, there is no evidence that the dimer exists under physiological conditions or has biological significance. The cofactor is Fe(2+).

It carries out the reaction 3-sulfanylpropanoate + O2 = 3-sulfinopropanoate + H(+). Its function is as follows. Thiol dioxygenase that catalyzes the dioxygenation of 3-mercaptopropionate (3-MPA) to 3-sulfinopropionate (3-SPA). To a lesser extent (40-fold lower efficiency), is also able to oxidize cysteine to cysteine sulfinate (CSA). Cannot use N-acetyl-L-cysteine, homocysteine, and cysteamine as substrates. The physiological role of this enzyme is unclear. The sequence is that of 3-mercaptopropionate dioxygenase from Pseudomonas aeruginosa (strain ATCC 15692 / DSM 22644 / CIP 104116 / JCM 14847 / LMG 12228 / 1C / PRS 101 / PAO1).